A 397-amino-acid polypeptide reads, in one-letter code: Ribosomal RNA large subunit methyltransferase I (397 aa).

The region spanning 2-80 (AIRIKLKPGR…KEETIDADFF (79 aa)) is the PUA domain.

This sequence belongs to the methyltransferase superfamily. RlmI family.

The protein localises to the cytoplasm. The catalysed reaction is cytidine(1962) in 23S rRNA + S-adenosyl-L-methionine = 5-methylcytidine(1962) in 23S rRNA + S-adenosyl-L-homocysteine + H(+). Its function is as follows. Specifically methylates the cytosine at position 1962 (m5C1962) of 23S rRNA. This is Ribosomal RNA large subunit methyltransferase I from Shewanella frigidimarina (strain NCIMB 400).